The primary structure comprises 446 residues: Neuropeptide Y receptor type 5 (446 aa).

The Extracellular segment spans residues M1–Y42. 2 N-linked (GlcNAc...) asparagine glycosylation sites follow: N10 and N17. Residues F43–L63 traverse the membrane as a helical segment. Residues M64–N77 are Cytoplasmic-facing. A helical membrane pass occupies residues F78–T98. Residues L99–M117 lie on the Extracellular side of the membrane. A disulfide bridge connects residues C114 and C198. The chain crosses the membrane as a helical span at residues P118 to V138. The Cytoplasmic portion of the chain corresponds to R139 to G156. The chain crosses the membrane as a helical span at residues Y157–F177. Residues H178–R208 are Extracellular-facing. Residues I209–V229 form a helical membrane-spanning segment. Over S230 to R369 the chain is Cytoplasmic. The segment at R297–P325 is disordered. Residues L370–V390 form a helical membrane-spanning segment. The Extracellular segment spans residues T391–Y407. Residues C408–L428 traverse the membrane as a helical segment. Residues N429–S446 are Cytoplasmic-facing. Residue C442 is the site of S-palmitoyl cysteine attachment.

It belongs to the G-protein coupled receptor 1 family.

Its subcellular location is the cell membrane. Functionally, receptor for neuropeptide Y and peptide YY. The activity of this receptor is mediated by G proteins that inhibit adenylate cyclase activity. Seems to be associated with food intake. Could be involved in feeding disorders. This is Neuropeptide Y receptor type 5 (NPY5R) from Sus scrofa (Pig).